The sequence spans 185 residues: Potassium-transporting ATPase KdpC subunit (185 aa).

A helical membrane pass occupies residues 8–28 (LGLVLIMFVLCGFIFPLTVTA). The tract at residues 113–132 (GQKLSSDAVTTSGSGLDPDI) is disordered. Residues 114-126 (QKLSSDAVTTSGS) are compositionally biased toward polar residues.

This sequence belongs to the KdpC family. In terms of assembly, the system is composed of three essential subunits: KdpA, KdpB and KdpC.

It localises to the cell membrane. Part of the high-affinity ATP-driven potassium transport (or Kdp) system, which catalyzes the hydrolysis of ATP coupled with the electrogenic transport of potassium into the cytoplasm. This subunit acts as a catalytic chaperone that increases the ATP-binding affinity of the ATP-hydrolyzing subunit KdpB by the formation of a transient KdpB/KdpC/ATP ternary complex. The polypeptide is Potassium-transporting ATPase KdpC subunit (Staphylococcus haemolyticus (strain JCSC1435)).